A 346-amino-acid chain; its full sequence is Uroporphyrinogen decarboxylase (346 aa).

Residues 23 to 27 (RQAGR), Asp-73, Tyr-151, Ser-206, and His-321 contribute to the substrate site.

It belongs to the uroporphyrinogen decarboxylase family. In terms of assembly, homodimer.

Its subcellular location is the cytoplasm. It catalyses the reaction uroporphyrinogen III + 4 H(+) = coproporphyrinogen III + 4 CO2. It participates in porphyrin-containing compound metabolism; protoporphyrin-IX biosynthesis; coproporphyrinogen-III from 5-aminolevulinate: step 4/4. In terms of biological role, catalyzes the decarboxylation of four acetate groups of uroporphyrinogen-III to yield coproporphyrinogen-III. This is Uroporphyrinogen decarboxylase from Sulfurovum sp. (strain NBC37-1).